Here is a 239-residue protein sequence, read N- to C-terminus: Probable transcriptional regulatory protein LMOf2365_0385 (239 aa).

Belongs to the TACO1 family. YeeN subfamily.

Its subcellular location is the cytoplasm. The chain is Probable transcriptional regulatory protein LMOf2365_0385 from Listeria monocytogenes serotype 4b (strain F2365).